The chain runs to 140 residues: Large ribosomal subunit protein uL11 (140 aa).

It belongs to the universal ribosomal protein uL11 family. In terms of assembly, part of the ribosomal stalk of the 50S ribosomal subunit. Interacts with L10 and the large rRNA to form the base of the stalk. L10 forms an elongated spine to which L12 dimers bind in a sequential fashion forming a multimeric L10(L12)X complex. Post-translationally, one or more lysine residues are methylated.

Functionally, forms part of the ribosomal stalk which helps the ribosome interact with GTP-bound translation factors. The polypeptide is Large ribosomal subunit protein uL11 (Staphylococcus aureus (strain Mu3 / ATCC 700698)).